Consider the following 146-residue polypeptide: Transcriptional regulator MraZ (146 aa).

SpoVT-AbrB domains are found at residues Glu-5–Asp-47 and Ser-76–Lys-119.

This sequence belongs to the MraZ family. As to quaternary structure, forms oligomers.

It localises to the cytoplasm. The protein resides in the nucleoid. This is Transcriptional regulator MraZ from Dictyoglomus thermophilum (strain ATCC 35947 / DSM 3960 / H-6-12).